We begin with the raw amino-acid sequence, 362 residues long: tRNA/tmRNA (uracil-C(5))-methyltransferase (362 aa).

S-adenosyl-L-methionine is bound by residues Gln-182, Tyr-210, Asn-215, Glu-231, and Asp-293. Cys-318 (nucleophile) is an active-site residue. Residue Glu-352 is the Proton acceptor of the active site.

This sequence belongs to the class I-like SAM-binding methyltransferase superfamily. RNA M5U methyltransferase family. TrmA subfamily.

The enzyme catalyses uridine(54) in tRNA + S-adenosyl-L-methionine = 5-methyluridine(54) in tRNA + S-adenosyl-L-homocysteine + H(+). It catalyses the reaction uridine(341) in tmRNA + S-adenosyl-L-methionine = 5-methyluridine(341) in tmRNA + S-adenosyl-L-homocysteine + H(+). Functionally, dual-specificity methyltransferase that catalyzes the formation of 5-methyluridine at position 54 (m5U54) in all tRNAs, and that of position 341 (m5U341) in tmRNA (transfer-mRNA). This chain is tRNA/tmRNA (uracil-C(5))-methyltransferase, found in Neisseria meningitidis serogroup B (strain ATCC BAA-335 / MC58).